Here is a 245-residue protein sequence, read N- to C-terminus: Tryptophan synthase alpha chain (245 aa).

Residues glutamate 37 and aspartate 48 each act as proton acceptor in the active site.

This sequence belongs to the TrpA family. Tetramer of two alpha and two beta chains.

It catalyses the reaction (1S,2R)-1-C-(indol-3-yl)glycerol 3-phosphate + L-serine = D-glyceraldehyde 3-phosphate + L-tryptophan + H2O. It functions in the pathway amino-acid biosynthesis; L-tryptophan biosynthesis; L-tryptophan from chorismate: step 5/5. In terms of biological role, the alpha subunit is responsible for the aldol cleavage of indoleglycerol phosphate to indole and glyceraldehyde 3-phosphate. The polypeptide is Tryptophan synthase alpha chain (Saccharolobus solfataricus (strain ATCC 35092 / DSM 1617 / JCM 11322 / P2) (Sulfolobus solfataricus)).